The sequence spans 335 residues: Ketol-acid reductoisomerase (NADP(+)) (335 aa).

A KARI N-terminal Rossmann domain is found at methionine 1–threonine 182. NADP(+) contacts are provided by residues tyrosine 25–glutamine 28, arginine 48, serine 51, serine 53, and aspartate 83–glutamine 86. Histidine 108 is a catalytic residue. NADP(+) is bound at residue glycine 134. Residues threonine 183 to leucine 328 enclose the KARI C-terminal knotted domain. Mg(2+) is bound by residues aspartate 191, glutamate 195, glutamate 227, and glutamate 231. A substrate-binding site is contributed by serine 252.

This sequence belongs to the ketol-acid reductoisomerase family. Mg(2+) serves as cofactor.

It carries out the reaction (2R)-2,3-dihydroxy-3-methylbutanoate + NADP(+) = (2S)-2-acetolactate + NADPH + H(+). The enzyme catalyses (2R,3R)-2,3-dihydroxy-3-methylpentanoate + NADP(+) = (S)-2-ethyl-2-hydroxy-3-oxobutanoate + NADPH + H(+). It participates in amino-acid biosynthesis; L-isoleucine biosynthesis; L-isoleucine from 2-oxobutanoate: step 2/4. It functions in the pathway amino-acid biosynthesis; L-valine biosynthesis; L-valine from pyruvate: step 2/4. Functionally, involved in the biosynthesis of branched-chain amino acids (BCAA). Catalyzes an alkyl-migration followed by a ketol-acid reduction of (S)-2-acetolactate (S2AL) to yield (R)-2,3-dihydroxy-isovalerate. In the isomerase reaction, S2AL is rearranged via a Mg-dependent methyl migration to produce 3-hydroxy-3-methyl-2-ketobutyrate (HMKB). In the reductase reaction, this 2-ketoacid undergoes a metal-dependent reduction by NADPH to yield (R)-2,3-dihydroxy-isovalerate. This is Ketol-acid reductoisomerase (NADP(+)) from Methanosarcina mazei (strain ATCC BAA-159 / DSM 3647 / Goe1 / Go1 / JCM 11833 / OCM 88) (Methanosarcina frisia).